The primary structure comprises 295 residues: Sulfotransferase 1E1 (295 aa).

Residue 48–53 (KSGSTW) participates in 3'-phosphoadenylyl sulfate binding. 106–108 (KTH) provides a ligand contact to substrate. His-108 (proton acceptor) is an active-site residue. Arg-130 and Ser-138 together coordinate 3'-phosphoadenylyl sulfate. Ser-156 carries the post-translational modification Phosphoserine. 3'-phosphoadenylyl sulfate is bound by residues Tyr-193, 227–232 (TSFQEM), and 257–259 (RKG).

It belongs to the sulfotransferase 1 family. In terms of assembly, homodimer. As to expression, liver of young mature males and uterus.

The protein localises to the cytoplasm. It localises to the cytosol. It catalyses the reaction estrone + 3'-phosphoadenylyl sulfate = estrone 3-sulfate + adenosine 3',5'-bisphosphate + H(+). It carries out the reaction (24S)-hydroxycholesterol + 3'-phosphoadenylyl sulfate = (24S)-hydroxycholesterol 3-sulfate + adenosine 3',5'-bisphosphate + H(+). The enzyme catalyses 17beta-estradiol + 3'-phosphoadenylyl sulfate = 17beta-estradiol 3-sulfate + adenosine 3',5'-bisphosphate + H(+). The catalysed reaction is 3beta-hydroxyandrost-5-en-17-one + 3'-phosphoadenylyl sulfate = dehydroepiandrosterone 3-sulfate + adenosine 3',5'-bisphosphate + H(+). It catalyses the reaction 4-ethylphenol + 3'-phosphoadenylyl sulfate = 4-ethylphenyl sulfate + adenosine 3',5'-bisphosphate + H(+). Its activity is regulated as follows. Inhibited by estradiol. Its function is as follows. Sulfotransferase that utilizes 3'-phospho-5'-adenylyl sulfate (PAPS) as sulfonate donor to catalyze the sulfate conjugation of estradiol and estrone. Is a key enzyme in estrogen homeostasis, the sulfation of estrogens leads to their inactivation. Also sulfates dehydroepiandrosterone (DHEA), pregnenolone, (24S)-hydroxycholesterol and xenobiotic compounds like ethinylestradiol, equalenin, diethyl stilbesterol and 1-naphthol at significantly lower efficiency. Does not sulfonate cortisol, testosterone and dopamine. May play a role in gut microbiota-host metabolic interaction. O-sulfonates 4-ethylphenol (4-EP), a dietary tyrosine-derived metabolite produced by gut bacteria. The product 4-EPS crosses the blood-brain barrier and may negatively regulate oligodendrocyte maturation and myelination, affecting the functional connectivity of different brain regions associated with the limbic system. The sequence is that of Sulfotransferase 1E1 from Rattus norvegicus (Rat).